The following is a 290-amino-acid chain: Protease HtpX homolog (290 aa).

A run of 2 helical transmembrane segments spans residues 4 to 24 (IFLFIATNIAVIAVMSVVLSL) and 39 to 59 (PMLLVFSLVVGFTGSIISLLI). A Zn(2+)-binding site is contributed by histidine 144. Glutamate 145 is a catalytic residue. Histidine 148 is a Zn(2+) binding site. 2 consecutive transmembrane segments (helical) span residues 159–179 (LVQGVVNTFVVFLSRVVGYFV) and 197–217 (ITVIVSQIVFGIAASVIVAWF). Glutamate 222 provides a ligand contact to Zn(2+).

Belongs to the peptidase M48B family. It depends on Zn(2+) as a cofactor.

The protein resides in the cell inner membrane. The protein is Protease HtpX homolog of Janthinobacterium sp. (strain Marseille) (Minibacterium massiliensis).